We begin with the raw amino-acid sequence, 723 residues long: ADP-ribosylation factor-binding protein GGA3 (723 aa).

A binds to ARF1 (in long isoform) region spans residues 1–313 (MAEAEGESLE…GEVATLTLPD (313 aa)). Positions 16 to 146 (ATNPSNRQED…MLKRQGIVQS (131 aa)) constitute a VHS domain. Ser159 and Ser275 each carry phosphoserine. A GAT domain is found at 171–298 (DEEKSKLLAK…VINSYKTIIE (128 aa)). A unstructured hinge region spans residues 299–593 (GQVINGEVAT…IHVPLESIKP (295 aa)). A disordered region spans residues 339–384 (SSVLAPAPTPPSSGIPILPPPPQASGPPRSRSSSQAEATLGPSSTS). Over residues 345–363 (APTPPSSGIPILPPPPQAS) the composition is skewed to pro residues. Positions 364-374 (GPPRSRSSSQA) are enriched in low complexity. The DXXLL signature appears at 391-395 (DEELL). The tract at residues 428–464 (DFFSPRPGTAACGASDAPLLQPSAPSSSSSQAPLPPP) is disordered. Residues 441–459 (ASDAPLLQPSAPSSSSSQA) show a composition bias toward low complexity. A GAE domain is found at 594 to 715 (SSALPVTAYD…TEVGEVDQFP (122 aa)).

Belongs to the GGA protein family. As to quaternary structure, monomer. Interacts with GGA1 and GGA2. Binds to clathrin and activated ARFs, such as ARF1, ARF5 and ARF6. Binds RABEP1 and RABGEF1. Interacts with the membrane proteins M6PR/CD-MPR and IGF2R/CI-MPR and the accessory proteins SYNRG, EPN4, NECAP1, NECAP2 and AFTPH/aftiphilin. Interacts with TSG101 and UBC. Interacts with ADRA2B. Interacts with NTRK1; the interaction is independent of NTRK1 activation and ubiquitination. Interacts (via VHS domain) with BACE1 (via DXXLL motif). Post-translationally, phosphorylated by CK2 and dephosphorylated by PP2A. Phosphorylation of GGA3 allows the internal DXXLL motif to bind the VHS domain and to inhibit the recognition of cargo signals. Ubiquitinated. In terms of processing, proteolytically cleaved during apoptosis by CASP3. In terms of tissue distribution, ubiquitously expressed.

The protein localises to the golgi apparatus. The protein resides in the trans-Golgi network membrane. It localises to the endosome membrane. Its subcellular location is the early endosome membrane. It is found in the recycling endosome membrane. Functionally, plays a role in protein sorting and trafficking between the trans-Golgi network (TGN) and endosomes. Mediates the ARF-dependent recruitment of clathrin to the TGN and binds ubiquitinated proteins and membrane cargo molecules with a cytosolic acidic cluster-dileucine (DXXLL) motif. Mediates export of the GPCR receptor ADRA2B to the cell surface. nvolved in BACE1 transport and sorting as well as regulation of BACE1 protein levels. Regulates retrograde transport of BACE1 from endosomes to the trans-Golgi network via interaction through the VHS motif and dependent of BACE1 phosphorylation. Modulates BACE1 protein levels independently of the interaction between VHS domain and DXXLL motif through recognition of ubiquitination. Key player in a novel DXXLL-mediated endosomal sorting machinery to the recycling pathway that targets NTRK1 to the plasma membrane. This is ADP-ribosylation factor-binding protein GGA3 from Homo sapiens (Human).